We begin with the raw amino-acid sequence, 343 residues long: 4-hydroxy-2-oxovalerate aldolase (343 aa).

The region spanning 5 to 256 (ILLCDPTLRD…ETGIDLYKIL (252 aa)) is the Pyruvate carboxyltransferase domain. 13-14 (RD) is a substrate binding site. A Mn(2+)-binding site is contributed by Asp14. The active-site Proton acceptor is His17. Substrate-binding residues include Ser168 and His195. Mn(2+) is bound by residues His195 and His197.

The protein belongs to the 4-hydroxy-2-oxovalerate aldolase family. As to quaternary structure, interacts with MhpF.

The enzyme catalyses (S)-4-hydroxy-2-oxopentanoate = acetaldehyde + pyruvate. The protein operates within aromatic compound metabolism; 3-phenylpropanoate degradation. Functionally, catalyzes the retro-aldol cleavage of 4-hydroxy-2-oxopentanoate to pyruvate and acetaldehyde. Is involved in the meta-cleavage pathway for the degradation of aromatic compounds. In Pectobacterium atrosepticum (strain SCRI 1043 / ATCC BAA-672) (Erwinia carotovora subsp. atroseptica), this protein is 4-hydroxy-2-oxovalerate aldolase.